The chain runs to 94 residues: MLKPLGGRVALKIEEKGPTVGGFVLAGSAQEKTQTAQVVATGQGVCTLNGDLVAPSVKTGDRVLVEAHAGFDVKDGDEKYIIVGEANILAIIEE.

Belongs to the GroES chaperonin family. As to quaternary structure, heptamer of 7 subunits arranged in a ring. Interacts with the chaperonin GroEL.

The protein resides in the cytoplasm. Functionally, together with the chaperonin GroEL, plays an essential role in assisting protein folding. The GroEL-GroES system forms a nano-cage that allows encapsulation of the non-native substrate proteins and provides a physical environment optimized to promote and accelerate protein folding. GroES binds to the apical surface of the GroEL ring, thereby capping the opening of the GroEL channel. This chain is Co-chaperonin GroES, found in Streptococcus pneumoniae (strain CGSP14).